The primary structure comprises 312 residues: MTKIIFMGTPEFSVPVLTQLASTYDVVAVVTQPDRPVGRKRVLTPPPVKKAALELAIPVYQPEKLRTSSELEELIALEADLLVTAAYGQILPNSLLESPKHGAINVHASLLPEYRGGAPVHYALLDGKTETGVTIMYMVEKLDAGDMISQRKIPITDEDNTGTMFDKLSILGAELLMDTLPDFLAGKITATPQDPEKVTFARNISREQEKIDWTKPGRTIFNQIRGLSPWPVAYTTLEEKPFKIWEATYEDTKEGGEPGAILADKTTLKIVAGDGTLIVPTVIQPAGKPKMDVHSFMTGAGRNLSKTTRFGE.

109-112 (SLLP) is a binding site for (6S)-5,6,7,8-tetrahydrofolate.

The protein belongs to the Fmt family.

The enzyme catalyses L-methionyl-tRNA(fMet) + (6R)-10-formyltetrahydrofolate = N-formyl-L-methionyl-tRNA(fMet) + (6S)-5,6,7,8-tetrahydrofolate + H(+). Attaches a formyl group to the free amino group of methionyl-tRNA(fMet). The formyl group appears to play a dual role in the initiator identity of N-formylmethionyl-tRNA by promoting its recognition by IF2 and preventing the misappropriation of this tRNA by the elongation apparatus. This Listeria monocytogenes serovar 1/2a (strain ATCC BAA-679 / EGD-e) protein is Methionyl-tRNA formyltransferase.